The following is a 113-amino-acid chain: ATP-dependent Clp protease adapter protein ClpS (113 aa).

It belongs to the ClpS family. Binds to the N-terminal domain of the chaperone ClpA.

Its function is as follows. Involved in the modulation of the specificity of the ClpAP-mediated ATP-dependent protein degradation. This Corynebacterium diphtheriae (strain ATCC 700971 / NCTC 13129 / Biotype gravis) protein is ATP-dependent Clp protease adapter protein ClpS.